We begin with the raw amino-acid sequence, 286 residues long: Pantothenate synthetase (286 aa).

30-37 serves as a coordination point for ATP; it reads MGNLHSGH. The active-site Proton donor is the H37. Q61 serves as a coordination point for (R)-pantoate. Beta-alanine is bound at residue Q61. 149-152 lines the ATP pocket; it reads GQKD. Residue Q155 coordinates (R)-pantoate. ATP-binding positions include V178 and 186–189; that span reads LSSR.

It belongs to the pantothenate synthetase family. As to quaternary structure, homodimer.

The protein localises to the cytoplasm. The enzyme catalyses (R)-pantoate + beta-alanine + ATP = (R)-pantothenate + AMP + diphosphate + H(+). Its pathway is cofactor biosynthesis; (R)-pantothenate biosynthesis; (R)-pantothenate from (R)-pantoate and beta-alanine: step 1/1. Its function is as follows. Catalyzes the condensation of pantoate with beta-alanine in an ATP-dependent reaction via a pantoyl-adenylate intermediate. The protein is Pantothenate synthetase of Pseudomonas fluorescens (strain Pf0-1).